The primary structure comprises 225 residues: uncharacterized protein (225 aa).

Residues 12 to 32 form a helical membrane-spanning segment; sequence AGFMMIFVFVIASFLLVLLFF.

The protein localises to the cell membrane. This is an uncharacterized protein from Bacillus subtilis (strain 168).